We begin with the raw amino-acid sequence, 748 residues long: Catalase-peroxidase (748 aa).

Positions 92–238 (WHSAGTYRIG…LAAVQMGLIY (147 aa)) form a cross-link, tryptophyl-tyrosyl-methioninium (Trp-Tyr) (with M-264). H93 (proton acceptor) is an active-site residue. The tryptophyl-tyrosyl-methioninium (Tyr-Met) (with W-92) cross-link spans 238–264 (YVNPEGPDGNPDPIASARDIRDTFARM). Residue H279 coordinates heme b.

This sequence belongs to the peroxidase family. Peroxidase/catalase subfamily. In terms of assembly, homodimer or homotetramer. It depends on heme b as a cofactor. Formation of the three residue Trp-Tyr-Met cross-link is important for the catalase, but not the peroxidase activity of the enzyme.

The catalysed reaction is H2O2 + AH2 = A + 2 H2O. It catalyses the reaction 2 H2O2 = O2 + 2 H2O. Functionally, bifunctional enzyme with both catalase and broad-spectrum peroxidase activity. The protein is Catalase-peroxidase of Xanthomonas axonopodis pv. citri (strain 306).